A 395-amino-acid polypeptide reads, in one-letter code: HORMA domain-containing protein 1 (395 aa).

The HORMA domain maps to 24-226 (QQSLVLVKRL…TPFHTFKVKV (203 aa)). The disordered stretch occupies residues 329–395 (DVSESKTRSG…RKFSEPKEYV (67 aa)). The span at 344–353 (KMANGNQPVK) shows a compositional bias: polar residues. Residues 354-363 (SSKENRKRNQ) show a composition bias toward basic and acidic residues. Residue Ser-377 is modified to Phosphoserine. The short motif at 384 to 387 (KRRK) is the Nuclear localization signal element.

As to quaternary structure, interacts with HORMAD2. Interacts with IHO1. In terms of processing, phosphorylated at Ser-378 in a SPO11-dependent manner.

It is found in the nucleus. The protein localises to the chromosome. In terms of biological role, plays a key role in meiotic progression. Regulates 3 different functions during meiosis: ensures that sufficient numbers of processed DNA double-strand breaks (DSBs) are available for successful homology search by increasing the steady-state numbers of single-stranded DSB ends. Promotes synaptonemal-complex formation independently of its role in homology search. Plays a key role in the male mid-pachytene checkpoint and the female meiotic prophase checkpoint: required for efficient build-up of ATR activity on unsynapsed chromosome regions, a process believed to form the basis of meiotic silencing of unsynapsed chromatin (MSUC) and meiotic prophase quality control in both sexes. The sequence is that of HORMA domain-containing protein 1 (HORMAD1) from Canis lupus familiaris (Dog).